The chain runs to 260 residues: MKKLALSLSLVLAFSSATAAFAAIPQKIRIGTDPTYAPFESKNAQGELVGFDIDLAKELCKRINTQCTFVENPLDALIPSLKAKKIDAIMSSLSITEKRQQEIAFTDKLYAADSRLVVAKNSDIQPTVASLKGKRVGVLQGTTQETFGNEHWAPKGIEIVSYQGQDNIYSDLTAGRIDAAFQDEVAASEGFLKQPVGKDYKFGGPAVKDEKLFGVGTGMGLRKEDNELREALNKAFAEMRADGTYEKLAKKYFDFDVYGG.

The N-terminal stretch at 1–22 (MKKLALSLSLVLAFSSATAAFA) is a signal peptide. Cys60 and Cys67 are oxidised to a cystine. Positions 91, 92, 94, 99, 143, and 183 each coordinate L-histidine.

It belongs to the bacterial solute-binding protein 3 family. The complex is composed of two ATP-binding proteins (HisP), two transmembrane proteins (HisM and HisQ) and a solute-binding protein (HisJ).

The protein localises to the periplasm. In terms of biological role, part of the ABC transporter complex HisPMQJ involved in histidine transport. Binds histidine. Interacts with HisQMP and stimulates ATPase activity of HisP, which results in histidine translocation. May have some additional function(s) in translocation that is independent of the stimulation of ATP hydrolysis. This chain is Histidine-binding periplasmic protein, found in Salmonella typhimurium (strain LT2 / SGSC1412 / ATCC 700720).